Here is an 823-residue protein sequence, read N- to C-terminus: Protein Jade-3 (823 aa).

The disordered stretch occupies residues 1–40 (MKRHRPVSSSESSDECPSTSFTSSSMYRKKSKNPKEQKKS). The segment covering 8–20 (SSSESSDECPSTS) has biased composition (low complexity). An N6-acetyllysine mark is found at K30, K32, and K35. The PHD-type 1 zinc finger occupies 200–250 (DVICDVCRSPDSEEGNDMVFCDKCNVCVHQACYGILKIPEGSWLCRSCVLG). Residues 252-286 (YPQCVLCPKKGGAMKTTRTGTKWAHVSCALWIPEV) form a C2HC pre-PHD-type zinc finger. The PHD-type 2 zinc finger occupies 310–366 (LVCNLCKLKTGACIQCSVKSCITAFHVTCAFEHGLEMKTILDEGDEVKFKSFCLKHS). 2 disordered regions span residues 543–585 (LKMP…PEEP) and 601–631 (KSNC…AEFY). Residues 549 to 562 (TSEDCKDSSTETEH) are compositionally biased toward basic and acidic residues. 2 positions are modified to phosphoserine: S566 and S578. Position 601 is an N6-acetyllysine (K601). At S608 the chain carries Phosphoserine. Position 638 is an N6-acetyllysine (K638). The interval 651–676 (SIGNGKNQPNSRVSSSNGLEGNWSGN) is disordered. At K735 the chain carries N6-acetyllysine. The segment at 756–823 (TGRASYQETD…HPHSHSSMQR (68 aa)) is disordered. A phosphoserine mark is found at S774 and S776. The segment covering 781–809 (EGSKETPRVKRESSDRENPSHDSARECHG) has biased composition (basic and acidic residues).

The protein belongs to the JADE family. Component of the HBO1 complex composed at least of ING4 or ING5, MYST2/HBO1, MEAF6, and one of JADE1, JADE2 and JADE3.

In terms of biological role, scaffold subunit of some HBO1 complexes, which have a histone H4 acetyltransferase activity. In Mus musculus (Mouse), this protein is Protein Jade-3 (Jade3).